Reading from the N-terminus, the 448-residue chain is UDP-N-acetylmuramoyl-L-alanine--L-glutamate ligase (448 aa).

118–124 provides a ligand contact to ATP; it reads GSKGKST.

Belongs to the MurCDEF family. MurD2 subfamily.

The protein resides in the cytoplasm. The catalysed reaction is UDP-N-acetyl-alpha-D-muramoyl-L-alanine + L-glutamate + ATP = UDP-N-acetyl-alpha-D-muramoyl-L-alanyl-L-glutamate + ADP + phosphate + H(+). It participates in cell wall biogenesis; peptidoglycan biosynthesis. Its function is as follows. Cell wall formation. Catalyzes the addition of L-glutamate to the nucleotide precursor UDP-N-acetylmuramoyl-L-alanine. The chain is UDP-N-acetylmuramoyl-L-alanine--L-glutamate ligase from Salinispora tropica (strain ATCC BAA-916 / DSM 44818 / JCM 13857 / NBRC 105044 / CNB-440).